The chain runs to 106 residues: HIG1 domain family member 2B (106 aa).

Residues 1–46 are Cytoplasmic-facing; sequence MATLGFVTPEAPFESSKPPIFEGLSPTVYSNPEGFKEKFLRKTREN. Positions 20 to 106 constitute an HIG1 domain; it reads IFEGLSPTVY…LAATAMKSPP (87 aa). Residues 47-67 form a helical membrane-spanning segment; sequence PVVPIGFLCTAAVLTNGLYCF. Residues 68-81 lie on the Extracellular side of the membrane; the sequence is HQGNSQCSRLMMHT. A helical membrane pass occupies residues 82 to 102; that stretch reads QIAAQGFTIAAILLGLAATAM. Topologically, residues 103 to 106 are cytoplasmic; that stretch reads KSPP.

Its subcellular location is the membrane. This chain is HIG1 domain family member 2B (HIGD2B), found in Homo sapiens (Human).